We begin with the raw amino-acid sequence, 245 residues long: Probable ABC transporter permease protein HI_0355 (245 aa).

The next 6 membrane-spanning stretches (helical) occupy residues Leu9 to Pro29, Ile61 to Phe81, Ile92 to Phe112, Gly115 to Cys135, Leu170 to Val190, and Phe217 to Leu237. The region spanning Leu50–Ile234 is the ABC transmembrane type-1 domain.

It belongs to the binding-protein-dependent transport system permease family. CysTW subfamily.

It is found in the cell inner membrane. Its function is as follows. Probably part of a binding-protein-dependent transport system. Probably responsible for the translocation of the substrate across the membrane. The protein is Probable ABC transporter permease protein HI_0355 of Haemophilus influenzae (strain ATCC 51907 / DSM 11121 / KW20 / Rd).